We begin with the raw amino-acid sequence, 286 residues long: Putative transcription factor kapC (286 aa).

Residues 1-10 (MQPALAPAPH) show a composition bias toward pro residues. The tract at residues 1 to 120 (MQPALAPAPH…QNRAAQRAFR (120 aa)) is disordered. Over residues 26-40 (HDQLLAAHQHLSHPQ) the composition is skewed to low complexity. Positions 41 to 54 (QPRPQAPATQPPHM) are enriched in pro residues. Polar residues predominate over residues 55-67 (QPNTASPRDQNNI). Pro residues predominate over residues 81 to 92 (PQTPPQPEPAPQ). One can recognise a bZIP domain in the interval 102–165 (PLSTSKRAAQ…EYIINLQTRL (64 aa)). The basic motif stretch occupies residues 103 to 126 (LSTSKRAAQNRAAQRAFRQRKESY). Low complexity predominate over residues 108–118 (RAAQNRAAQRA). A leucine-zipper region spans residues 130-161 (LEEQVKHQEAITEEYKALHAENYQLREYIINL). The disordered stretch occupies residues 197-286 (RGNAASAGPA…QEPDGLPVVS (90 aa)). Residues 198–222 (GNAASAGPAPAGPGPQQSQPNQNQG) show a composition bias toward low complexity.

It belongs to the bZIP family.

It is found in the nucleus. Functionally, putative transcription factor. The polypeptide is Putative transcription factor kapC (kapC) (Aspergillus terreus (strain NIH 2624 / FGSC A1156)).